The sequence spans 750 residues: uncharacterized protein (750 aa).

Residues Asn61, Asn84, Asn115, Asn154, Asn176, Asn197, Asn207, Asn228, Asn241, Asn267, Asn293, Asn299, Asn312, Asn335, Asn351, Asn373, Asn389, and Asn519 are each glycosylated (N-linked (GlcNAc...) asparagine). Phosphoserine occurs at positions 675 and 678. Residue Lys697 forms a Glycyl lysine isopeptide (Lys-Gly) (interchain with G-Cter in ubiquitin) linkage. Composition is skewed to polar residues over residues 703-726 (EITAIDNSSSANNTDVTGSTSNRT) and 736-750 (KDSNGPVNNNAHLVA). A disordered region spans residues 703–750 (EITAIDNSSSANNTDVTGSTSNRTELSHPDVTPKDSNGPVNNNAHLVA). N-linked (GlcNAc...) asparagine glycosylation is found at Asn709, Asn714, and Asn724.

In terms of processing, N-glycosylated.

Its subcellular location is the mitochondrion. This is an uncharacterized protein from Saccharomyces cerevisiae (strain ATCC 204508 / S288c) (Baker's yeast).